The primary structure comprises 477 residues: Leukotoxin export protein LtxD (477 aa).

A helical transmembrane segment spans residues 64–84; it reads IMLFLTLAIIVSIFSNVEIIA. Residues 206–287 are a coiled coil; that stretch reads LNLNKKEAEK…ENEVLLAKEE (82 aa).

The protein belongs to the membrane fusion protein (MFP) (TC 8.A.1) family. In terms of assembly, probably part of a complex composed of LtxB, LtxD and TdeA, which forms a single transport channel across the two membranes.

It is found in the cell inner membrane. In terms of biological role, involved in the export of the LtxA leukotoxin. The polypeptide is Leukotoxin export protein LtxD (Aggregatibacter actinomycetemcomitans (Actinobacillus actinomycetemcomitans)).